Here is a 204-residue protein sequence, read N- to C-terminus: Ribosomal RNA small subunit methyltransferase G (204 aa).

Residues G76, L81, 127-128 (IE), and R140 contribute to the S-adenosyl-L-methionine site.

It belongs to the methyltransferase superfamily. RNA methyltransferase RsmG family.

The protein localises to the cytoplasm. It catalyses the reaction guanosine(527) in 16S rRNA + S-adenosyl-L-methionine = N(7)-methylguanosine(527) in 16S rRNA + S-adenosyl-L-homocysteine. In terms of biological role, specifically methylates the N7 position of guanine in position 527 of 16S rRNA. In Francisella philomiragia subsp. philomiragia (strain ATCC 25017 / CCUG 19701 / FSC 153 / O#319-036), this protein is Ribosomal RNA small subunit methyltransferase G.